A 219-amino-acid polypeptide reads, in one-letter code: Ribose-5-phosphate isomerase A (219 aa).

Substrate is bound by residues 28 to 31 (TGST), 81 to 84 (DGAD), and 94 to 97 (KGGG). Glutamate 103 serves as the catalytic Proton acceptor. Lysine 121 serves as a coordination point for substrate.

This sequence belongs to the ribose 5-phosphate isomerase family. Homodimer.

The enzyme catalyses aldehydo-D-ribose 5-phosphate = D-ribulose 5-phosphate. It functions in the pathway carbohydrate degradation; pentose phosphate pathway; D-ribose 5-phosphate from D-ribulose 5-phosphate (non-oxidative stage): step 1/1. Its function is as follows. Catalyzes the reversible conversion of ribose-5-phosphate to ribulose 5-phosphate. In Shewanella pealeana (strain ATCC 700345 / ANG-SQ1), this protein is Ribose-5-phosphate isomerase A.